Here is a 308-residue protein sequence, read N- to C-terminus: L-lactate dehydrogenase 2 (308 aa).

NAD(+) is bound by residues V14, D35, Y65, and 79-80 (GA). Substrate is bound at residue R88. NAD(+) is bound at residue S101. 120–123 (NPVD) contacts substrate. NAD(+) is bound at residue T143. 148 to 151 (DTAR) is a binding site for substrate. The active-site Proton acceptor is H175. T225 provides a ligand contact to substrate.

Belongs to the LDH/MDH superfamily. LDH family. As to quaternary structure, homotetramer.

It is found in the cytoplasm. The enzyme catalyses (S)-lactate + NAD(+) = pyruvate + NADH + H(+). Its pathway is fermentation; pyruvate fermentation to lactate; (S)-lactate from pyruvate: step 1/1. Its function is as follows. Catalyzes the conversion of lactate to pyruvate. This Lactobacillus johnsonii (strain CNCM I-12250 / La1 / NCC 533) protein is L-lactate dehydrogenase 2.